A 971-amino-acid polypeptide reads, in one-letter code: Kinesin-like protein KIN-14C (971 aa).

In terms of domain architecture, Calponin-homology (CH) spans 14 to 119 (ANRRAEVIDW…CLLALKDNVA (106 aa)). A coiled-coil region spans residues 272 to 357 (IKALETLVNG…QMETKARQME (86 aa)). In terms of domain architecture, Kinesin motor spans 472 to 799 (NIRVYCRVRP…LKFAERVSGV (328 aa)). 556 to 563 (GQTGSGKT) serves as a coordination point for ATP. A coiled-coil region spans residues 809-844 (EGKDIKELLEQVASLKDTIARKDMEIEQLQLLKSKS). Residues 839 to 881 (LLKSKSPNSMTDRNGSNLLRQSTSSTGLSSLPVASQQNQQLSG) show a composition bias toward polar residues. Residues 839–971 (LLKSKSPNSM…GSLAKPSKRR (133 aa)) are disordered.

Belongs to the TRAFAC class myosin-kinesin ATPase superfamily. Kinesin family. KIN-14 subfamily.

The sequence is that of Kinesin-like protein KIN-14C from Oryza sativa subsp. japonica (Rice).